The chain runs to 906 residues: Protein translocase subunit SecA (906 aa).

ATP-binding positions include Gln-86, 104–108 (GEGKT), and Asp-499. The disordered stretch occupies residues 865–885 (VSRIDPKDRNPEDPTSWGRVS). Residues Cys-890, Cys-892, Cys-901, and His-902 each contribute to the Zn(2+) site.

Belongs to the SecA family. In terms of assembly, monomer and homodimer. Part of the essential Sec protein translocation apparatus which comprises SecA, SecYEG and auxiliary proteins SecDF-YajC and YidC. Zn(2+) is required as a cofactor.

The protein resides in the cell inner membrane. Its subcellular location is the cytoplasm. It catalyses the reaction ATP + H2O + cellular proteinSide 1 = ADP + phosphate + cellular proteinSide 2.. Its function is as follows. Part of the Sec protein translocase complex. Interacts with the SecYEG preprotein conducting channel. Has a central role in coupling the hydrolysis of ATP to the transfer of proteins into and across the cell membrane, serving both as a receptor for the preprotein-SecB complex and as an ATP-driven molecular motor driving the stepwise translocation of polypeptide chains across the membrane. This Rickettsia canadensis (strain McKiel) protein is Protein translocase subunit SecA.